A 91-amino-acid polypeptide reads, in one-letter code: Early E3B 10.4 kDa protein (91 aa).

The first 22 residues, 1-22 (MIPRNFFFTILICAFNVCATFT), serve as a signal peptide directing secretion. Residues 23-34 (AVATASPDCIGP) lie on the Lumenal side of the membrane. Residues 35–60 (FASYALFAFVTCICVCSIVCLVINFF) traverse the membrane as a helical segment. At 61-91 (QLVDWIFVRIAYLRHHPEYRNQNVAALLRLI) the chain is on the cytoplasmic side.

The protein belongs to the adenoviridae E3B family.

The protein localises to the host endoplasmic reticulum membrane. Functionally, down-regulates the EGF receptor. This is Early E3B 10.4 kDa protein from Homo sapiens (Human).